A 143-amino-acid chain; its full sequence is Nucleoside diphosphate kinase (143 aa).

Residues Lys-11, Phe-59, Arg-87, Thr-93, Arg-104, and Asn-114 each coordinate ATP. His-117 (pros-phosphohistidine intermediate) is an active-site residue.

Belongs to the NDK family. Homotetramer. Requires Mg(2+) as cofactor.

It is found in the cytoplasm. The enzyme catalyses a 2'-deoxyribonucleoside 5'-diphosphate + ATP = a 2'-deoxyribonucleoside 5'-triphosphate + ADP. It catalyses the reaction a ribonucleoside 5'-diphosphate + ATP = a ribonucleoside 5'-triphosphate + ADP. Its function is as follows. Major role in the synthesis of nucleoside triphosphates other than ATP. The ATP gamma phosphate is transferred to the NDP beta phosphate via a ping-pong mechanism, using a phosphorylated active-site intermediate. This chain is Nucleoside diphosphate kinase, found in Shewanella sp. (strain ANA-3).